A 353-amino-acid chain; its full sequence is Phosphoribosylformylglycinamidine cyclo-ligase (353 aa).

Belongs to the AIR synthase family.

It is found in the cytoplasm. It carries out the reaction 2-formamido-N(1)-(5-O-phospho-beta-D-ribosyl)acetamidine + ATP = 5-amino-1-(5-phospho-beta-D-ribosyl)imidazole + ADP + phosphate + H(+). It participates in purine metabolism; IMP biosynthesis via de novo pathway; 5-amino-1-(5-phospho-D-ribosyl)imidazole from N(2)-formyl-N(1)-(5-phospho-D-ribosyl)glycinamide: step 2/2. This chain is Phosphoribosylformylglycinamidine cyclo-ligase, found in Ralstonia nicotianae (strain ATCC BAA-1114 / GMI1000) (Ralstonia solanacearum).